The sequence spans 1010 residues: Retinoblastoma-related protein 3 (1010 aa).

The segment at 416–616 (TPVSTAMTTA…EKGSSMYNSL (201 aa)) is domain A. The segment at 416–858 (TPVSTAMTTA…NEVFIPAVKS (443 aa)) is pocket. Residues 617-727 (IVARPALSVE…PAAGGETCAE (111 aa)) are spacer. Residues 728–858 (TGIGVFFSKI…NEVFIPAVKS (131 aa)) form a domain B region. 2 disordered regions span residues 867 to 889 (ASAS…FPES) and 986 to 1010 (GSDR…PSDS).

It belongs to the retinoblastoma protein (RB) family.

It is found in the nucleus. Its function is as follows. Regulator of biological processes that recruits a histone deacetylase to control gene transcription. May play a role in the entry into mitosis, negatively regulating the cell proliferation. Formation of stable complexes with geminiviridae replication-associated proteins may create a cellular environment which favors viral DNA replication. This Zea mays (Maize) protein is Retinoblastoma-related protein 3 (RBR3).